A 352-amino-acid chain; its full sequence is Photosystem II D2 protein (352 aa).

Topologically, residues 1–31 are cytoplasmic; sequence MTIAIGRAPAERGWFDILDDWLKRDRFVFVG. The chain crosses the membrane as a helical span at residues 32–53; that stretch reads WSGILLFPCAYLALGGWLTGTT. Residues 54–108 are Lumenal-facing; that stretch reads FVTSWYTHGLASSYLEGCNFLTVAVSTPANSMGHSLLLLWGPEAQGDFTRWCQLG. A helical membrane pass occupies residues 109-131; it reads GLWTFIALHGAFGLIGFMLRQFE. H117 contributes to the chlorophyll a binding site. Q129 contributes to the pheophytin a binding site. Over 132-140 the chain is Cytoplasmic; it reads IARLVGVRP. A helical transmembrane segment spans residues 141-160; sequence YNAIAFSAPIAVFVSVFLIY. Pheophytin a is bound at residue N142. The Lumenal portion of the chain corresponds to 161 to 193; that stretch reads PLGQSSWFFAPSFGVAAIFRFLLFFQGFHNWTL. Residues 194–217 traverse the membrane as a helical segment; that stretch reads NPFHMMGVAGVLGGALLCAIHGAT. H197 serves as a coordination point for chlorophyll a. H214 and F261 together coordinate a plastoquinone. Fe cation is bound at residue H214. At 218–265 the chain is on the cytoplasmic side; sequence VENTLFQDGEGASTFRAFNPTQAEETYSMVTANRFWSQIFGIAFSNKR. The chain crosses the membrane as a helical span at residues 266 to 288; that stretch reads WLHFFMLFVPVTGLWMSAIGVVG. Residue H268 coordinates Fe cation. Topologically, residues 289-352 are lumenal; that stretch reads LALNLRSYDF…EEVLPRGNAL (64 aa).

The protein belongs to the reaction center PufL/M/PsbA/D family. In terms of assembly, PSII is composed of 1 copy each of membrane proteins PsbA, PsbB, PsbC, PsbD, PsbE, PsbF, PsbH, PsbI, PsbJ, PsbK, PsbL, PsbM, PsbT, PsbX, PsbY, PsbZ, Psb30/Ycf12, peripheral proteins PsbO, CyanoQ (PsbQ), PsbU, PsbV and a large number of cofactors. It forms dimeric complexes. Part of a photosystem II (PSII) assembly intermediate complex PSII-I; crystallized from a strain deleted of psbJ, it forms monomeric PSII before addition of the oxygen evolving complex. PSII-I includes 3 assembly factors not found in mature PSII (Psb27, Psb28 and Psb34). Requires The D1/D2 heterodimer binds P680, chlorophylls that are the primary electron donor of PSII, and subsequent electron acceptors. It shares a non-heme iron and each subunit binds pheophytin, quinone, additional chlorophylls, carotenoids and lipids. There is also a Cl(-1) ion associated with D1 and D2, which is required for oxygen evolution. PSII binds additional chlorophylls, carotenoids and specific lipids. as cofactor.

It is found in the cellular thylakoid membrane. The enzyme catalyses 2 a plastoquinone + 4 hnu + 2 H2O = 2 a plastoquinol + O2. In terms of biological role, photosystem II (PSII) is a light-driven water:plastoquinone oxidoreductase that uses light energy to abstract electrons from H(2)O, generating O(2) and a proton gradient subsequently used for ATP formation. It consists of a core antenna complex that captures photons, and an electron transfer chain that converts photonic excitation into a charge separation. The D1/D2 (PsbA/PsbD) reaction center heterodimer binds P680, the primary electron donor of PSII as well as several subsequent electron acceptors. D2 is needed for assembly of a stable PSII complex. This chain is Photosystem II D2 protein, found in Thermosynechococcus vestitus (strain NIES-2133 / IAM M-273 / BP-1).